Consider the following 248-residue polypeptide: Phosphatidylglycerol--prolipoprotein diacylglyceryl transferase (248 aa).

Helical transmembrane passes span 6-26 (FTLF…GMIL), 47-67 (NIAI…YVVF), and 84-104 (GGGL…YIYT). An a 1,2-diacyl-sn-glycero-3-phospho-(1'-sn-glycerol)-binding site is contributed by Arg130. 2 helical membrane passes run 186–206 (GQVI…IEGL) and 218–238 (MAQV…VYLS).

This sequence belongs to the Lgt family.

It localises to the cell membrane. The enzyme catalyses L-cysteinyl-[prolipoprotein] + a 1,2-diacyl-sn-glycero-3-phospho-(1'-sn-glycerol) = an S-1,2-diacyl-sn-glyceryl-L-cysteinyl-[prolipoprotein] + sn-glycerol 1-phosphate + H(+). It participates in protein modification; lipoprotein biosynthesis (diacylglyceryl transfer). Functionally, catalyzes the transfer of the diacylglyceryl group from phosphatidylglycerol to the sulfhydryl group of the N-terminal cysteine of a prolipoprotein, the first step in the formation of mature lipoproteins. This Clostridioides difficile (strain 630) (Peptoclostridium difficile) protein is Phosphatidylglycerol--prolipoprotein diacylglyceryl transferase.